Reading from the N-terminus, the 57-residue chain is UPF0391 membrane protein IL0696 (57 aa).

2 helical membrane passes run 4–24 (WVLI…GGIA) and 28–48 (AGIA…SLVV).

Belongs to the UPF0391 family.

It localises to the cell membrane. This chain is UPF0391 membrane protein IL0696, found in Idiomarina loihiensis (strain ATCC BAA-735 / DSM 15497 / L2-TR).